A 205-amino-acid polypeptide reads, in one-letter code: Arginine exporter protein ArgO (205 aa).

6 consecutive transmembrane segments (helical) span residues 1–21 (MLAV…PLGP), 37–57 (LMVA…GIFG), 68–88 (LLAL…WGAF), 112–132 (VVTM…TFVV), 147–167 (WFAL…ALLA), and 182–202 (IINT…AWQG).

Belongs to the LysE/ArgO transporter (TC 2.A.75) family.

Its subcellular location is the cell inner membrane. It catalyses the reaction L-arginine(in) = L-arginine(out). In terms of biological role, involved in the export of arginine. Important to control the intracellular level of arginine and the correct balance between arginine and lysine. In Serratia proteamaculans (strain 568), this protein is Arginine exporter protein ArgO.